Here is a 617-residue protein sequence, read N- to C-terminus: Phosphatidylinositol-3,5-bisphosphate 3-phosphatase MTMR6 (617 aa).

The GRAM domain occupies 1–101 (MEHIRTTKVE…YNSLLQLSKQ (101 aa)). Residues 2–141 (EHIRTTKVEQ…AEYERMGVPN (140 aa)) are interaction with RAB1B. Tyr-108 carries the phosphotyrosine modification. The Myotubularin phosphatase domain maps to 124–499 (GWQLIDLAAE…FNFKFWRNMY (376 aa)). 3 residues coordinate a 1,2-diacyl-sn-glycero-3-phospho-(1D-myo-inositol-3,5-bisphosphate): Asn-248, Asn-273, and Ile-274. Residues Asn-248, Asn-273, and Ile-274 each contribute to the a 1,2-diacyl-sn-glycero-3-phospho-(1D-myo-inositol-3-phosphate) site. Cys-336 serves as the catalytic Phosphocysteine intermediate. A 1,2-diacyl-sn-glycero-3-phospho-(1D-myo-inositol-3,5-bisphosphate) is bound by residues Ser-337, Asp-338, Gly-339, Trp-340, Asp-341, Arg-342, Lys-378, and Arg-382. 6 residues coordinate a 1,2-diacyl-sn-glycero-3-phospho-(1D-myo-inositol-3-phosphate): Ser-337, Asp-338, Gly-339, Trp-340, Asp-341, and Arg-342. Residue Arg-382 participates in a 1,2-diacyl-sn-glycero-3-phospho-(1D-myo-inositol-3-phosphate) binding. Phosphoserine is present on residues Ser-557, Ser-585, and Ser-607.

This sequence belongs to the protein-tyrosine phosphatase family. Non-receptor class myotubularin subfamily. As to quaternary structure, homodimer. Heterodimer (via C-terminus) with MTMR9 (via C-terminus). Interacts with ALKBH4. Interacts with KCNN4. Interacts (via GRAM domain) with RAB1B (in GDP-bound form); the interaction regulates MTMR6 recruitment to the endoplasmic reticulum-Golgi intermediate compartment. Isoform 1: Ubiquitously expressed including in heart, brain, spleen, lung, liver, muscle, kidney and testis (at protein level). Isoform 2: Expressed in testis (at protein level).

It localises to the cytoplasm. The protein localises to the endoplasmic reticulum-Golgi intermediate compartment. The protein resides in the cell projection. Its subcellular location is the ruffle membrane. It is found in the endoplasmic reticulum. The catalysed reaction is a 1,2-diacyl-sn-glycero-3-phospho-(1D-myo-inositol-3,5-bisphosphate) + H2O = a 1,2-diacyl-sn-glycero-3-phospho-(1D-myo-inositol-5-phosphate) + phosphate. The enzyme catalyses a 1,2-diacyl-sn-glycero-3-phospho-(1D-myo-inositol-3-phosphate) + H2O = a 1,2-diacyl-sn-glycero-3-phospho-(1D-myo-inositol) + phosphate. It carries out the reaction 1,2-dioctanoyl-sn-glycero-3-phospho-(1D-myo-inositol-3,5-bisphosphate) + H2O = 1,2-dioctanoyl-sn-glycero-3-phospho-(1D-myo-inositol-5-phosphate) + phosphate. It catalyses the reaction 1,2-dioctanoyl-sn-glycero-3-phospho-(1-D-myo-inositol-3-phosphate) + H2O = 1,2-dioctanoyl-sn-glycero-3-phospho-(1D-myo-inositol) + phosphate. Allosterically activated by phosphatidylserine and/or phosphatidylinositol 4-phosphate (PtdIns(4)P), and phosphatidylinositol 5-phosphate (PtdIns(5)P). Interaction with MTMR9 increases catalytic activity towards phosphatidylinositol 3,5-bisphosphate. Its function is as follows. Lipid phosphatase that specifically dephosphorylates the D-3 position of phosphatidylinositol 3-phosphate and phosphatidylinositol 3,5-bisphosphate, generating phosphatidylinositol and phosphatidylinositol 5-phosphate. Binds with high affinity to phosphatidylinositol 3,5-bisphosphate (PtdIns(3,5)P2) but also to phosphatidylinositol 3-phosphate (PtdIns(3)P), phosphatidylinositol 4-phosphate (PtdIns(4)P), and phosphatidylinositol 5-phosphate (PtdIns(5)P), phosphatidic acid and phosphatidylserine. Negatively regulates ER-Golgi protein transport. Probably in association with MTMR9, plays a role in the late stages of macropinocytosis by dephosphorylating phosphatidylinositol 3-phosphate in membrane ruffles. Acts as a negative regulator of KCNN4/KCa3.1 channel activity in CD4(+) T-cells possibly by decreasing intracellular levels of phosphatidylinositol 3-phosphate. Negatively regulates proliferation of reactivated CD4(+) T-cells. In complex with MTMR9, negatively regulates DNA damage-induced apoptosis. The formation of the MTMR6-MTMR9 complex stabilizes both MTMR6 and MTMR9 protein levels. The chain is Phosphatidylinositol-3,5-bisphosphate 3-phosphatase MTMR6 from Mus musculus (Mouse).